Consider the following 143-residue polypeptide: HTH-type transcriptional regulator MntR (143 aa).

The 63-residue stretch at 1-63 (MPTPSMEDYL…YERYRGLVLT (63 aa)) folds into the HTH dtxR-type domain. 6 residues coordinate Mn(2+): D8, E11, H77, E99, E102, and H103.

This sequence belongs to the DtxR/MntR family. In terms of assembly, homodimer.

It localises to the cytoplasm. With respect to regulation, DNA binding is strongly activated by Mn(2+). Central regulator of manganese homeostasis. This Shouchella clausii (strain KSM-K16) (Alkalihalobacillus clausii) protein is HTH-type transcriptional regulator MntR.